The following is a 206-amino-acid chain: Translocation protein SEC66 (206 aa).

Residues 1 to 27 (MSEFNETKFSNNGTFFETEEPIVETKS) lie on the Lumenal side of the membrane. Asparagine 5 and asparagine 12 each carry an N-linked (GlcNAc...) asparagine glycan. Residues 28–48 (ISVYTPLIYVFILVVSLVMFA) form a helical; Signal-anchor for type II membrane protein membrane-spanning segment. Topologically, residues 49 to 206 (SSYRKKQAKK…KINNDGRLVN (158 aa)) are cytoplasmic.

The protein to S.pombe SpBC409.21. As to quaternary structure, component of the heterotetrameric Sec62/63complex composed of SEC62, SEC63, SEC66 and SEC72. The Sec62/63 complex associates with the Sec61 complex to form the Sec complex. Part of a complex consisting of KAR2, SEC63, SEC66 and SEC72.

The protein resides in the endoplasmic reticulum membrane. Functionally, acts as a component of the Sec62/63 complex which is involved in SRP-independent post-translational translocation across the endoplasmic reticulum (ER) and functions together with the Sec61 complex and KAR2 in a channel-forming translocon complex. A cycle of assembly and disassembly of Sec62/63 complex from SEC61 may govern the activity of the translocon. SEC66 is required to attach or retain SEC72 in the SEC63 complex. It is essential for growth at elevated temperatures. In Saccharomyces cerevisiae (strain ATCC 204508 / S288c) (Baker's yeast), this protein is Translocation protein SEC66 (SEC66).